The chain runs to 117 residues: Hydrogenase maturation factor HypA (117 aa).

Ni(2+) is bound at residue His2. Zn(2+)-binding residues include Cys73, Cys76, Cys89, and Cys92.

Belongs to the HypA/HybF family.

Functionally, involved in the maturation of [NiFe] hydrogenases. Required for nickel insertion into the metal center of the hydrogenase. The polypeptide is Hydrogenase maturation factor HypA (Shewanella baltica (strain OS223)).